Consider the following 340-residue polypeptide: DNA-directed RNA polymerase subunit alpha (340 aa).

Positions 1–236 (MLSLSKNWNT…EQLQLFISFE (236 aa)) are alpha N-terminal domain (alpha-NTD). The interval 251–340 (FSPYLLKRVD…LSKRYEDSYN (90 aa)) is alpha C-terminal domain (alpha-CTD).

It belongs to the RNA polymerase alpha chain family. Homodimer. The RNAP catalytic core consists of 2 alpha, 1 beta, 1 beta' and 1 omega subunit. When a sigma factor is associated with the core the holoenzyme is formed, which can initiate transcription.

The enzyme catalyses RNA(n) + a ribonucleoside 5'-triphosphate = RNA(n+1) + diphosphate. Functionally, DNA-dependent RNA polymerase catalyzes the transcription of DNA into RNA using the four ribonucleoside triphosphates as substrates. In Rickettsia africae (strain ESF-5), this protein is DNA-directed RNA polymerase subunit alpha.